The chain runs to 169 residues: Probable calcium-binding protein CML20 (169 aa).

The disordered stretch occupies residues 1 to 23 (MSSIYRTVSRKEKPRRHHGLTTQ). EF-hand domains follow at residues 23 to 58 (QKKQEIKEAFELFDTDGSGTIDAKELNVAMRALGFE), 59 to 94 (MTEEQINKMIADVDKDGSGAIDFDEFVHMMTAKIGE), 96 to 131 (DTKEELTKAFQIIDLDKNGKISPDDIKRMAKDLGEN), and 132 to 167 (FTDAEIREMVEEADRDRDGEVNMDEFMRMMRRTAYG). Ca(2+) contacts are provided by Asp36, Asp38, Ser40, Thr42, Glu47, Asp72, Asp74, Ser76, Glu83, Asp109, Asp111, Asn113, Lys115, Asp120, Asp145, Asp147, Asp149, Glu151, and Glu156.

Interacts with TON1A and TON1B. Interacts with SAC3A and SAC3B. Interacts with UCH1 and UCH2.

Its function is as follows. Potential calcium sensor. The protein is Probable calcium-binding protein CML20 of Arabidopsis thaliana (Mouse-ear cress).